The following is a 373-amino-acid chain: Peptide chain release factor 2 (373 aa).

Position 251 is an N5-methylglutamine (Gln-251).

Belongs to the prokaryotic/mitochondrial release factor family. Methylated by PrmC. Methylation increases the termination efficiency of RF2.

It localises to the cytoplasm. Functionally, peptide chain release factor 2 directs the termination of translation in response to the peptide chain termination codons UGA and UAA. This chain is Peptide chain release factor 2, found in Salinispora arenicola (strain CNS-205).